The following is a 508-amino-acid chain: Serine/threonine-protein kinase VRK2 (508 aa).

A Protein kinase domain is found at 29-319; sequence WVLGKKIGSG…KKILNPHGIP (291 aa). ATP contacts are provided by residues 35 to 43 and lysine 61; that span reads IGSGGFGLI. Residue aspartate 166 is the Proton acceptor of the active site. Threonine 336 bears the Phosphothreonine mark. The segment at 397-508 is interaction with MAP3K7; sequence TRRRQKYQES…MLVFLALFFL (112 aa). At serine 406 the chain carries Phosphoserine. Residues 487–507 traverse the membrane as a helical; Anchor for type IV membrane protein segment; sequence VYYYRIIIPVLLMLVFLALFF.

Belongs to the protein kinase superfamily. CK1 Ser/Thr protein kinase family. VRK subfamily. Isoform 1 interacts with MAP3K7, MAP2K7, MAP2K1 and KSR1. Isoform 1 and isoform 2 interact with RAN and MAPK8IP1. In terms of assembly, (Microbial infection) Isoform 1 interacts with Epstein-Barr virus BHRF1; this interaction is involved in protecting cells from apoptosis. As to quaternary structure, (Microbial infection) Isoform 1 interacts with vaccinia protein B12. Post-translationally, autophosphorylated. As to expression, isoform 1 and isoform 2 are expressed in various tumor cell lines. Expression of isoform 1 inversely correlates with ERBB2 in breast carcinomas (at protein level). Widely expressed. Highly expressed in fetal liver, skeletal muscle, pancreas, heart, peripheral blood leukocytes and testis.

The protein resides in the cytoplasm. It localises to the endoplasmic reticulum membrane. It is found in the mitochondrion membrane. Its subcellular location is the nucleus envelope. The protein localises to the nucleus. The enzyme catalyses L-seryl-[protein] + ATP = O-phospho-L-seryl-[protein] + ADP + H(+). It catalyses the reaction L-threonyl-[protein] + ATP = O-phospho-L-threonyl-[protein] + ADP + H(+). Its activity is regulated as follows. RAN inhibits its autophosphorylation and its ability to phosphorylate histone H3. In terms of biological role, serine/threonine kinase that regulates several signal transduction pathways. Isoform 1 modulates the stress response to hypoxia and cytokines, such as interleukin-1 beta (IL1B) and this is dependent on its interaction with MAPK8IP1, which assembles mitogen-activated protein kinase (MAPK) complexes. Inhibition of signal transmission mediated by the assembly of MAPK8IP1-MAPK complexes reduces JNK phosphorylation and JUN-dependent transcription. Phosphorylates 'Thr-18' of p53/TP53, histone H3, and may also phosphorylate MAPK8IP1. Phosphorylates BANF1 and disrupts its ability to bind DNA and reduces its binding to LEM domain-containing proteins. Down-regulates the transactivation of transcription induced by ERBB2, HRAS, BRAF, and MEK1. Blocks the phosphorylation of ERK in response to ERBB2 and HRAS. Can also phosphorylate the following substrates that are commonly used to establish in vitro kinase activity: casein, MBP and histone H2B, but it is not sure that this is physiologically relevant. Its function is as follows. Phosphorylates 'Thr-18' of p53/TP53, as well as histone H3. Reduces p53/TP53 ubiquitination by MDM2, promotes p53/TP53 acetylation by EP300 and thereby increases p53/TP53 stability and activity. This chain is Serine/threonine-protein kinase VRK2 (VRK2), found in Homo sapiens (Human).